Here is a 68-residue protein sequence, read N- to C-terminus: Large ribosomal subunit protein bL31 (68 aa).

The Zn(2+) site is built by Cys-16, Cys-18, Cys-37, and Cys-40.

This sequence belongs to the bacterial ribosomal protein bL31 family. Type A subfamily. Part of the 50S ribosomal subunit. It depends on Zn(2+) as a cofactor.

Functionally, binds the 23S rRNA. The sequence is that of Large ribosomal subunit protein bL31 from Acidithiobacillus ferrooxidans (strain ATCC 23270 / DSM 14882 / CIP 104768 / NCIMB 8455) (Ferrobacillus ferrooxidans (strain ATCC 23270)).